A 367-amino-acid polypeptide reads, in one-letter code: Anhydro-N-acetylmuramic acid kinase (367 aa).

11 to 18 (GTSLDGVD) contacts ATP.

It belongs to the anhydro-N-acetylmuramic acid kinase family.

The enzyme catalyses 1,6-anhydro-N-acetyl-beta-muramate + ATP + H2O = N-acetyl-D-muramate 6-phosphate + ADP + H(+). Its pathway is amino-sugar metabolism; 1,6-anhydro-N-acetylmuramate degradation. It participates in cell wall biogenesis; peptidoglycan recycling. Catalyzes the specific phosphorylation of 1,6-anhydro-N-acetylmuramic acid (anhMurNAc) with the simultaneous cleavage of the 1,6-anhydro ring, generating MurNAc-6-P. Is required for the utilization of anhMurNAc either imported from the medium or derived from its own cell wall murein, and thus plays a role in cell wall recycling. In Chromobacterium violaceum (strain ATCC 12472 / DSM 30191 / JCM 1249 / CCUG 213 / NBRC 12614 / NCIMB 9131 / NCTC 9757 / MK), this protein is Anhydro-N-acetylmuramic acid kinase.